A 394-amino-acid chain; its full sequence is DNA repair protein brc-2 (394 aa).

Over residues methionine 1 to phenylalanine 12 the composition is skewed to basic and acidic residues. Disordered regions lie at residues methionine 1–serine 30 and methionine 56–lysine 136. The segment at methionine 1 to aspartate 60 is interaction with rad-51. The BRCA2 repeat-like region stretch occupies residues proline 28–lysine 62. Over residues methionine 56 to serine 73 the composition is skewed to low complexity. The segment at aspartate 60–phenylalanine 89 is interaction with rad-51-DNA complexes. Positions lysine 124–lysine 134 are enriched in basic residues. The tract at residues tryptophan 371 to serine 389 is required for ssDNA binding.

Interacts (via N-terminus) with rad-51; regulates rad-51 recruitment to sites of DNA double strand breaks. As to expression, expressed in the germline, with highest expression in cells undergoing oogenesis.

The protein localises to the nucleus. The protein resides in the chromosome. Functionally, required for the homologous recombination repair of DNA double strand breaks, thereby playing a role in chromosome integrity. Acts by targeting rad-51 to sites of DNA damage and stabilizing rad-51-DNA filaments by blocking ATP hydrolysis catalyzed by rad-51. Promotes rad-51 mediated displacement-loop (D-loop) formation during strand invasion between the invading single-stranded DNA (ssDNA) and the homologous duplex DNA. Also functions independently of rad-51 in DNA double-strand break (DSB) repair by promoting DNA single-strand annealing (SSA) when the homologous recombination (HR) and non-homologous end joining (NHEJ) pathways are compromised. Binds selectively to single-stranded (ssDNA) via its C-terminus. Involved in telomere maintenance and replicative senescence. In Caenorhabditis elegans, this protein is DNA repair protein brc-2.